Reading from the N-terminus, the 132-residue chain is uncharacterized protein (132 aa).

Residues 1 to 35 (MSFEYRHYKREAKICTCRGGWAHVLLCIGVSQGAC) form the signal peptide. The tract at residues 91–132 (AHPGSHSDQPPGVPSRRKSRLERWSPSVSRSTSPPTEAPFCL) is disordered. Over residues 115-125 (SPSVSRSTSPP) the composition is skewed to low complexity.

It is found in the secreted. This is an uncharacterized protein from Homo sapiens (Human).